Consider the following 309-residue polypeptide: Homoserine O-succinyltransferase (309 aa).

C142 (acyl-thioester intermediate) is an active-site residue. Substrate-binding residues include K163 and S192. The Proton acceptor role is filled by H235. E237 is an active-site residue. R249 contacts substrate.

The protein belongs to the MetA family. As to quaternary structure, homodimer.

It is found in the cytoplasm. It catalyses the reaction L-homoserine + succinyl-CoA = O-succinyl-L-homoserine + CoA. It functions in the pathway amino-acid biosynthesis; L-methionine biosynthesis via de novo pathway; O-succinyl-L-homoserine from L-homoserine: step 1/1. Transfers a succinyl group from succinyl-CoA to L-homoserine, forming succinyl-L-homoserine. This chain is Homoserine O-succinyltransferase, found in Escherichia coli (strain SE11).